The following is a 482-amino-acid chain: ATP synthase subunit beta, chloroplastic (482 aa).

Residue 168–175 (GGAGVGKT) participates in ATP binding.

It belongs to the ATPase alpha/beta chains family. In terms of assembly, F-type ATPases have 2 components, CF(1) - the catalytic core - and CF(0) - the membrane proton channel. CF(1) has five subunits: alpha(3), beta(3), gamma(1), delta(1), epsilon(1). CF(0) has four main subunits: a(1), b(1), b'(1) and c(9-12).

It is found in the plastid. The protein resides in the chloroplast thylakoid membrane. It carries out the reaction ATP + H2O + 4 H(+)(in) = ADP + phosphate + 5 H(+)(out). Produces ATP from ADP in the presence of a proton gradient across the membrane. The catalytic sites are hosted primarily by the beta subunits. This Gnetum parvifolium (Small-leaved jointfir) protein is ATP synthase subunit beta, chloroplastic.